The chain runs to 432 residues: NADH-quinone oxidoreductase subunit D (432 aa).

The protein belongs to the complex I 49 kDa subunit family. In terms of assembly, NDH-1 is composed of 14 different subunits. Subunits NuoB, C, D, E, F, and G constitute the peripheral sector of the complex.

It localises to the cell membrane. It carries out the reaction a quinone + NADH + 5 H(+)(in) = a quinol + NAD(+) + 4 H(+)(out). Its function is as follows. NDH-1 shuttles electrons from NADH, via FMN and iron-sulfur (Fe-S) centers, to quinones in the respiratory chain. The immediate electron acceptor for the enzyme in this species is believed to be a menaquinone. Couples the redox reaction to proton translocation (for every two electrons transferred, four hydrogen ions are translocated across the cytoplasmic membrane), and thus conserves the redox energy in a proton gradient. This Mycobacterium marinum (strain ATCC BAA-535 / M) protein is NADH-quinone oxidoreductase subunit D.